The following is a 371-amino-acid chain: tRNA-specific 2-thiouridylase MnmA (371 aa).

ATP is bound by residues 12-19 (GMSGGVDS) and Met-38. The tract at residues 98–100 (NPD) is interaction with target base in tRNA. Residue Cys-103 is the Nucleophile of the active site. A disulfide bond links Cys-103 and Cys-200. Residue Gly-128 coordinates ATP. The segment at 150–152 (KDQ) is interaction with tRNA. The active-site Cysteine persulfide intermediate is the Cys-200. Residues 312 to 313 (RY) form an interaction with tRNA region.

Belongs to the MnmA/TRMU family. Interacts with TusE.

It is found in the cytoplasm. The enzyme catalyses S-sulfanyl-L-cysteinyl-[protein] + uridine(34) in tRNA + AH2 + ATP = 2-thiouridine(34) in tRNA + L-cysteinyl-[protein] + A + AMP + diphosphate + H(+). Catalyzes the 2-thiolation of uridine at the wobble position (U34) of tRNA(Lys), tRNA(Glu) and tRNA(Gln), leading to the formation of s(2)U34, the first step of tRNA-mnm(5)s(2)U34 synthesis. Sulfur is provided by IscS, via a sulfur-relay system. Binds ATP and its substrate tRNAs. The chain is tRNA-specific 2-thiouridylase MnmA from Yersinia pestis bv. Antiqua (strain Antiqua).